Reading from the N-terminus, the 395-residue chain is Elongation factor Tu (395 aa).

The 195-residue stretch at 10–204 folds into the tr-type G domain; it reads KPHVNIGTIG…TVDSYIPEPK (195 aa). The tract at residues 19–26 is G1; sequence GHVDHGKT. 19–26 is a GTP binding site; that stretch reads GHVDHGKT. Residue threonine 26 participates in Mg(2+) binding. The G2 stretch occupies residues 60-64; it reads GITIN. The tract at residues 81–84 is G3; sequence DAPG. Residues 81 to 85 and 136 to 139 each bind GTP; these read DAPGH and NKTD. Residues 136 to 139 are G4; the sequence is NKTD. Positions 174-176 are G5; sequence SAL.

The protein belongs to the TRAFAC class translation factor GTPase superfamily. Classic translation factor GTPase family. EF-Tu/EF-1A subfamily. As to quaternary structure, monomer.

Its subcellular location is the cytoplasm. It carries out the reaction GTP + H2O = GDP + phosphate + H(+). GTP hydrolase that promotes the GTP-dependent binding of aminoacyl-tRNA to the A-site of ribosomes during protein biosynthesis. In Leuconostoc citreum (strain KM20), this protein is Elongation factor Tu.